We begin with the raw amino-acid sequence, 217 residues long: LSM12 homolog A (217 aa).

In terms of domain architecture, Sm spans 9–78 (VNAVNDCFSI…CSNVQVIKEC (70 aa)). Residues 86–184 (QKLNLEQVKM…IIKQFFNTRP (99 aa)) form the AD domain. The tract at residues 185–217 (SPVPESGAAASTSSPSVSPTSSSLASGSPVPAN) is disordered. Low complexity predominate over residues 190-217 (SGAAASTSSPSVSPTSSSLASGSPVPAN).

This sequence belongs to the LSM12 family. In terms of assembly, component of the Atx2-tyf activator complex, composed of Atx2, tyf, pAbp, Lsm12a. Interacts with tyf, Atx2 and pAbp.

Functionally, component of the Atx2-tyf activator complex which functions in the circadian pacemaker neurons to activate the TYF-dependent translation of per and maintain 24 hour periodicity in circadian behaviors. Within the Atx2-tyf complex, likely to function as a molecular adapter which stabilizes the interaction between Atx2 and the translational regulator tyf. The polypeptide is LSM12 homolog A (Drosophila melanogaster (Fruit fly)).